A 72-amino-acid chain; its full sequence is Cell division protein ZapB (72 aa).

Positions 1–71 (MSLEILDQLE…IRSLLGKFDN (71 aa)) form a coiled coil.

Belongs to the ZapB family. Homodimer. The ends of the coiled-coil dimer bind to each other, forming polymers. Interacts with FtsZ.

Its subcellular location is the cytoplasm. Non-essential, abundant cell division factor that is required for proper Z-ring formation. It is recruited early to the divisome by direct interaction with FtsZ, stimulating Z-ring assembly and thereby promoting cell division earlier in the cell cycle. Its recruitment to the Z-ring requires functional FtsA or ZipA. This is Cell division protein ZapB from Haemophilus influenzae (strain 86-028NP).